Reading from the N-terminus, the 473-residue chain is Aspartyl/glutamyl-tRNA(Asn/Gln) amidotransferase subunit B (473 aa).

It belongs to the GatB/GatE family. GatB subfamily. Heterotrimer of A, B and C subunits.

The catalysed reaction is L-glutamyl-tRNA(Gln) + L-glutamine + ATP + H2O = L-glutaminyl-tRNA(Gln) + L-glutamate + ADP + phosphate + H(+). It carries out the reaction L-aspartyl-tRNA(Asn) + L-glutamine + ATP + H2O = L-asparaginyl-tRNA(Asn) + L-glutamate + ADP + phosphate + 2 H(+). Allows the formation of correctly charged Asn-tRNA(Asn) or Gln-tRNA(Gln) through the transamidation of misacylated Asp-tRNA(Asn) or Glu-tRNA(Gln) in organisms which lack either or both of asparaginyl-tRNA or glutaminyl-tRNA synthetases. The reaction takes place in the presence of glutamine and ATP through an activated phospho-Asp-tRNA(Asn) or phospho-Glu-tRNA(Gln). This is Aspartyl/glutamyl-tRNA(Asn/Gln) amidotransferase subunit B from Francisella tularensis subsp. tularensis (strain FSC 198).